Consider the following 281-residue polypeptide: MEMO1 family protein PAE0818 (281 aa).

The protein belongs to the MEMO1 family.

This is MEMO1 family protein PAE0818 from Pyrobaculum aerophilum (strain ATCC 51768 / DSM 7523 / JCM 9630 / CIP 104966 / NBRC 100827 / IM2).